The sequence spans 312 residues: DNA-directed RNA polymerase subunit alpha (312 aa).

Positions 1-227 are alpha N-terminal domain (alpha-NTD); the sequence is MNNFYIKCLK…SFFSSLLENK (227 aa). The alpha C-terminal domain (alpha-CTD) stretch occupies residues 243 to 312; sequence PKNPHTNIAI…KNKLGIVLSN (70 aa).

This sequence belongs to the RNA polymerase alpha chain family. As to quaternary structure, in plastids the minimal PEP RNA polymerase catalytic core is composed of four subunits: alpha, beta, beta', and beta''. When a (nuclear-encoded) sigma factor is associated with the core the holoenzyme is formed, which can initiate transcription.

Its subcellular location is the plastid. It localises to the chloroplast. It carries out the reaction RNA(n) + a ribonucleoside 5'-triphosphate = RNA(n+1) + diphosphate. DNA-dependent RNA polymerase catalyzes the transcription of DNA into RNA using the four ribonucleoside triphosphates as substrates. The protein is DNA-directed RNA polymerase subunit alpha of Trieres chinensis (Marine centric diatom).